We begin with the raw amino-acid sequence, 401 residues long: Argininosuccinate synthase (401 aa).

Residues 9 to 17 and alanine 36 each bind ATP; that span reads AYSGGLDTS. Tyrosine 87 and serine 92 together coordinate L-citrulline. Glycine 117 contacts ATP. Residues threonine 119, asparagine 123, and aspartate 124 each coordinate L-aspartate. Asparagine 123 provides a ligand contact to L-citrulline. Residues arginine 127, serine 176, serine 185, glutamate 261, and tyrosine 273 each contribute to the L-citrulline site.

This sequence belongs to the argininosuccinate synthase family. Type 1 subfamily. Homotetramer.

It is found in the cytoplasm. It catalyses the reaction L-citrulline + L-aspartate + ATP = 2-(N(omega)-L-arginino)succinate + AMP + diphosphate + H(+). It functions in the pathway amino-acid biosynthesis; L-arginine biosynthesis; L-arginine from L-ornithine and carbamoyl phosphate: step 2/3. The chain is Argininosuccinate synthase from Syntrophobacter fumaroxidans (strain DSM 10017 / MPOB).